The primary structure comprises 130 residues: Small ribosomal subunit protein uS8 (130 aa).

The protein belongs to the universal ribosomal protein uS8 family. As to quaternary structure, part of the 30S ribosomal subunit. Contacts proteins S5 and S12.

One of the primary rRNA binding proteins, it binds directly to 16S rRNA central domain where it helps coordinate assembly of the platform of the 30S subunit. The protein is Small ribosomal subunit protein uS8 of Edwardsiella ictaluri (strain 93-146).